Reading from the N-terminus, the 425-residue chain is MLDVKLLRANFEEIKQKLAHRGEDLSDFDQFEELDTKRRELIVKVEELKGKRNEVSQQVAALKREKKDADHLIKEMREVGEDIKKLDEELRTVESSLDKIMLSIPNIPHESVPVGETEDDNVEVRKWGELPEFSFEPKPHWDIADQLDILDFERAGKVTGSRFVFYKGLGARLERALYNFMLDLHVDEYGYTEVIPPYMVNRASMTGTGQLPKFEEDAFKIREEDYFLIPTAEVPITNLHRDEILSADELPINYAAFSACFRSEAGSAGRDTRGLIRQHQFNKVELVKFVKPEDSYEELEKLTNQAEKVLQLLELPYRVMSMCTGDLGFTAAKKYDIEVWIPSQNTYREISSCSNFEAFQARRANIRFRREAKGKPEHVHTLNGSGLAVGRTVAALLENYQQEDGSVIIPKALRPYMGNRDVIQP.

An L-serine-binding site is contributed by 231–233; it reads TAE. 262–264 contributes to the ATP binding site; the sequence is RSE. Glu285 contributes to the L-serine binding site. 349–352 contributes to the ATP binding site; that stretch reads EISS. Ser385 serves as a coordination point for L-serine.

The protein belongs to the class-II aminoacyl-tRNA synthetase family. Type-1 seryl-tRNA synthetase subfamily. Homodimer. The tRNA molecule binds across the dimer.

Its subcellular location is the cytoplasm. It catalyses the reaction tRNA(Ser) + L-serine + ATP = L-seryl-tRNA(Ser) + AMP + diphosphate + H(+). The catalysed reaction is tRNA(Sec) + L-serine + ATP = L-seryl-tRNA(Sec) + AMP + diphosphate + H(+). It participates in aminoacyl-tRNA biosynthesis; selenocysteinyl-tRNA(Sec) biosynthesis; L-seryl-tRNA(Sec) from L-serine and tRNA(Sec): step 1/1. In terms of biological role, catalyzes the attachment of serine to tRNA(Ser). Is also able to aminoacylate tRNA(Sec) with serine, to form the misacylated tRNA L-seryl-tRNA(Sec), which will be further converted into selenocysteinyl-tRNA(Sec). The protein is Serine--tRNA ligase of Bacillus licheniformis (strain ATCC 14580 / DSM 13 / JCM 2505 / CCUG 7422 / NBRC 12200 / NCIMB 9375 / NCTC 10341 / NRRL NRS-1264 / Gibson 46).